The following is a 551-amino-acid chain: 2,3-bisphosphoglycerate-independent phosphoglycerate mutase (551 aa).

The Mn(2+) site is built by aspartate 22 and serine 74. Serine 74 (phosphoserine intermediate) is an active-site residue. Residues histidine 135, 165 to 166 (RD), arginine 201, arginine 208, and 281 to 284 (RGDR) contribute to the substrate site. Aspartate 319 is a binding site for Mn(2+). Lysine 356 contributes to the substrate binding site. Positions 424, 428, 465, 466, and 495 each coordinate Mn(2+).

The protein belongs to the BPG-independent phosphoglycerate mutase family. In terms of assembly, monomer. Mn(2+) is required as a cofactor.

Its subcellular location is the cytoplasm. The enzyme catalyses (2R)-2-phosphoglycerate = (2R)-3-phosphoglycerate. The protein operates within carbohydrate degradation; glycolysis; pyruvate from D-glyceraldehyde 3-phosphate: step 3/5. Its function is as follows. Catalyzes the interconversion of 2-phosphoglycerate (2-PGA) and 3-phosphoglycerate (3-PGA). In Trypanosoma brucei brucei (strain 927/4 GUTat10.1), this protein is 2,3-bisphosphoglycerate-independent phosphoglycerate mutase.